A 320-amino-acid polypeptide reads, in one-letter code: N-acetylneuraminate lyase (320 aa).

Residues T51 and T52 each contribute to the aceneuramate site. The active-site Proton donor is the Y143. Catalysis depends on K173, which acts as the Schiff-base intermediate with substrate. Positions 175, 199, 201, 202, and 218 each coordinate aceneuramate.

The protein belongs to the DapA family. NanA subfamily. Homotetramer.

The protein resides in the cytoplasm. It carries out the reaction aceneuramate = aldehydo-N-acetyl-D-mannosamine + pyruvate. Its pathway is amino-sugar metabolism; N-acetylneuraminate degradation. In terms of biological role, catalyzes the cleavage of N-acetylneuraminic acid (sialic acid) to form pyruvate and N-acetylmannosamine via a Schiff base intermediate. It prevents sialic acids from being recycled and returning to the cell surface. Involved in the N-glycolylneuraminic acid (Neu5Gc) degradation pathway. The sequence is that of N-acetylneuraminate lyase from Pongo abelii (Sumatran orangutan).